The primary structure comprises 248 residues: Cytochrome c oxidase subunit 2 (248 aa).

Residues 1-36 (MLFFNSILNDAPSSWALYFQDGASPSYLGVTHLNDY) lie on the Mitochondrial intermembrane side of the membrane. A helical membrane pass occupies residues 37-57 (LMFYLTFIFIGVIYAICKAVI). Topologically, residues 58-75 (EYNYNSHPIAAKYTTHGS) are mitochondrial matrix. A helical transmembrane segment spans residues 76–100 (IVEFIWTLIPALILILVALPSFKLL). At 101–248 (YLLDEVQKPS…DFLAWLEENS (148 aa)) the chain is on the mitochondrial intermembrane side. Histidine 182, cysteine 217, glutamate 219, cysteine 221, histidine 225, and methionine 228 together coordinate Cu cation. A Mg(2+)-binding site is contributed by glutamate 219.

The protein belongs to the cytochrome c oxidase subunit 2 family. Component of the cytochrome c oxidase (complex IV, CIV), a multisubunit enzyme composed of a catalytic core of 3 subunits and several supernumerary subunits. The complex exists as a monomer or a dimer and forms supercomplexes (SCs) in the inner mitochondrial membrane with ubiquinol-cytochrome c oxidoreductase (cytochrome b-c1 complex, complex III, CIII). Requires Cu cation as cofactor.

The protein localises to the mitochondrion inner membrane. It carries out the reaction 4 Fe(II)-[cytochrome c] + O2 + 8 H(+)(in) = 4 Fe(III)-[cytochrome c] + 2 H2O + 4 H(+)(out). Its function is as follows. Component of the cytochrome c oxidase, the last enzyme in the mitochondrial electron transport chain which drives oxidative phosphorylation. The respiratory chain contains 3 multisubunit complexes succinate dehydrogenase (complex II, CII), ubiquinol-cytochrome c oxidoreductase (cytochrome b-c1 complex, complex III, CIII) and cytochrome c oxidase (complex IV, CIV), that cooperate to transfer electrons derived from NADH and succinate to molecular oxygen, creating an electrochemical gradient over the inner membrane that drives transmembrane transport and the ATP synthase. Cytochrome c oxidase is the component of the respiratory chain that catalyzes the reduction of oxygen to water. Electrons originating from reduced cytochrome c in the intermembrane space (IMS) are transferred via the dinuclear copper A center (CU(A)) of subunit 2 and heme A of subunit 1 to the active site in subunit 1, a binuclear center (BNC) formed by heme A3 and copper B (CU(B)). The BNC reduces molecular oxygen to 2 water molecules using 4 electrons from cytochrome c in the IMS and 4 protons from the mitochondrial matrix. In Schizosaccharomyces pombe (strain 972 / ATCC 24843) (Fission yeast), this protein is Cytochrome c oxidase subunit 2 (cox2).